The following is a 439-amino-acid chain: Diaminopimelate decarboxylase (439 aa).

Lys66 carries the N6-(pyridoxal phosphate)lysine modification. Pyridoxal 5'-phosphate is bound by residues Gly248 and 290–293 (EPGR). Substrate-binding residues include Arg293, Arg330, and Tyr334. Cys361 (proton donor) is an active-site residue. Substrate contacts are provided by Glu362 and Tyr390. Tyr390 contacts pyridoxal 5'-phosphate.

This sequence belongs to the Orn/Lys/Arg decarboxylase class-II family. LysA subfamily. In terms of assembly, homodimer. Pyridoxal 5'-phosphate serves as cofactor.

It catalyses the reaction meso-2,6-diaminopimelate + H(+) = L-lysine + CO2. It functions in the pathway amino-acid biosynthesis; L-lysine biosynthesis via DAP pathway; L-lysine from DL-2,6-diaminopimelate: step 1/1. Functionally, specifically catalyzes the decarboxylation of meso-diaminopimelate (meso-DAP) to L-lysine. The polypeptide is Diaminopimelate decarboxylase (Halalkalibacterium halodurans (strain ATCC BAA-125 / DSM 18197 / FERM 7344 / JCM 9153 / C-125) (Bacillus halodurans)).